We begin with the raw amino-acid sequence, 873 residues long: Leucine--tRNA ligase (873 aa).

The short motif at 42 to 52 (PYPSGKLHMGH) is the 'HIGH' region element. A disordered region spans residues 624 to 643 (PVEIGGTEKMSKSKNNGVDP). The 'KMSKS' region motif lies at 632–636 (KMSKS). K635 is an ATP binding site.

This sequence belongs to the class-I aminoacyl-tRNA synthetase family.

The protein resides in the cytoplasm. It carries out the reaction tRNA(Leu) + L-leucine + ATP = L-leucyl-tRNA(Leu) + AMP + diphosphate. The chain is Leucine--tRNA ligase from Pseudomonas aeruginosa (strain ATCC 15692 / DSM 22644 / CIP 104116 / JCM 14847 / LMG 12228 / 1C / PRS 101 / PAO1).